A 1182-amino-acid chain; its full sequence is DNA-directed RNA polymerase subunit beta' (1182 aa).

The Zn(2+) site is built by C59, C61, C74, and C77. Residues D449, D451, and D453 each contribute to the Mg(2+) site. The Zn(2+) site is built by C794, C868, C875, and C878.

It belongs to the RNA polymerase beta' chain family. In terms of assembly, the RNAP catalytic core consists of 2 alpha, 1 beta, 1 beta' and 1 omega subunit. When a sigma factor is associated with the core the holoenzyme is formed, which can initiate transcription. The cofactor is Mg(2+). Zn(2+) serves as cofactor.

The catalysed reaction is RNA(n) + a ribonucleoside 5'-triphosphate = RNA(n+1) + diphosphate. In terms of biological role, DNA-dependent RNA polymerase catalyzes the transcription of DNA into RNA using the four ribonucleoside triphosphates as substrates. The protein is DNA-directed RNA polymerase subunit beta' of Clostridium acetobutylicum (strain ATCC 824 / DSM 792 / JCM 1419 / IAM 19013 / LMG 5710 / NBRC 13948 / NRRL B-527 / VKM B-1787 / 2291 / W).